Consider the following 534-residue polypeptide: Beta-glucosidase 31 (534 aa).

An N-terminal signal peptide occupies residues 1–22 (MAIKLIALVITLCVASWDVAQG). Gln51 contributes to the a beta-D-glucoside binding site. N-linked (GlcNAc...) asparagine glycosylation is present at Asn68. Residues His154 and 199-200 (NE) each bind a beta-D-glucoside. The Proton donor role is filled by Glu200. Cysteines 219 and 227 form a disulfide. Tyr344 serves as a coordination point for a beta-D-glucoside. An N-linked (GlcNAc...) asparagine glycan is attached at Asn374. Glu417 lines the a beta-D-glucoside pocket. The active-site Nucleophile is the Glu417. N-linked (GlcNAc...) asparagine glycosylation is present at Asn425. A beta-D-glucoside is bound by residues Trp467, 474 to 475 (EW), and Phe483.

Belongs to the glycosyl hydrolase 1 family.

The catalysed reaction is Hydrolysis of terminal, non-reducing beta-D-glucosyl residues with release of beta-D-glucose.. This Arabidopsis thaliana (Mouse-ear cress) protein is Beta-glucosidase 31.